A 125-amino-acid polypeptide reads, in one-letter code: Ribosome maturation factor RimP (125 aa).

The protein belongs to the RimP family.

It is found in the cytoplasm. Required for maturation of 30S ribosomal subunits. This Rickettsia canadensis (strain McKiel) protein is Ribosome maturation factor RimP.